The primary structure comprises 291 residues: Phosphatidylserine decarboxylase proenzyme 2 (291 aa).

Catalysis depends on charge relay system; for autoendoproteolytic cleavage activity residues Asp112 and Ser251. Residue Ser251 is the Schiff-base intermediate with substrate; via pyruvic acid; for decarboxylase activity of the active site. Ser251 is modified (pyruvic acid (Ser); by autocatalysis).

Belongs to the phosphatidylserine decarboxylase family. PSD-B subfamily. Prokaryotic type II sub-subfamily. Heterodimer of a large membrane-associated beta subunit and a small pyruvoyl-containing alpha subunit. Pyruvate serves as cofactor. In terms of processing, is synthesized initially as an inactive proenzyme. Formation of the active enzyme involves a self-maturation process in which the active site pyruvoyl group is generated from an internal serine residue via an autocatalytic post-translational modification. Two non-identical subunits are generated from the proenzyme in this reaction, and the pyruvate is formed at the N-terminus of the alpha chain, which is derived from the carboxyl end of the proenzyme. The autoendoproteolytic cleavage occurs by a canonical serine protease mechanism, in which the side chain hydroxyl group of the serine supplies its oxygen atom to form the C-terminus of the beta chain, while the remainder of the serine residue undergoes an oxidative deamination to produce ammonia and the pyruvoyl prosthetic group on the alpha chain. During this reaction, the Ser that is part of the protease active site of the proenzyme becomes the pyruvoyl prosthetic group, which constitutes an essential element of the active site of the mature decarboxylase.

Its subcellular location is the cell membrane. The enzyme catalyses a 1,2-diacyl-sn-glycero-3-phospho-L-serine + H(+) = a 1,2-diacyl-sn-glycero-3-phosphoethanolamine + CO2. The protein operates within phospholipid metabolism; phosphatidylethanolamine biosynthesis; phosphatidylethanolamine from CDP-diacylglycerol: step 2/2. In terms of biological role, catalyzes the formation of phosphatidylethanolamine (PtdEtn) from phosphatidylserine (PtdSer). This chain is Phosphatidylserine decarboxylase proenzyme 2, found in Clostridium acetobutylicum (strain ATCC 824 / DSM 792 / JCM 1419 / IAM 19013 / LMG 5710 / NBRC 13948 / NRRL B-527 / VKM B-1787 / 2291 / W).